The chain runs to 304 residues: Phosphoribosylaminoimidazole-succinocarboxamide synthase (304 aa).

It belongs to the SAICAR synthetase family.

The catalysed reaction is 5-amino-1-(5-phospho-D-ribosyl)imidazole-4-carboxylate + L-aspartate + ATP = (2S)-2-[5-amino-1-(5-phospho-beta-D-ribosyl)imidazole-4-carboxamido]succinate + ADP + phosphate + 2 H(+). It functions in the pathway purine metabolism; IMP biosynthesis via de novo pathway; 5-amino-1-(5-phospho-D-ribosyl)imidazole-4-carboxamide from 5-amino-1-(5-phospho-D-ribosyl)imidazole-4-carboxylate: step 1/2. This is Phosphoribosylaminoimidazole-succinocarboxamide synthase (ADE1) from Komagataella pastoris (Yeast).